A 1503-amino-acid polypeptide reads, in one-letter code: Mitogen-activated protein kinase-binding protein 1 (1503 aa).

WD repeat units lie at residues S89 to E130, E133 to S174, K176 to V214, V271 to T310, A337 to K376, Y382 to S431, D472 to K511, A514 to Q556, E560 to Q601, V609 to L648, G654 to T693, and G696 to M735. Disordered stretches follow at residues R745–A817, L874–T917, and V951–S1176. Over residues K784–L796 the composition is skewed to acidic residues. Composition is skewed to polar residues over residues C905–T917 and D957–T972. Acidic residues predominate over residues D1028–G1043. Residues P1058–F1068 are compositionally biased toward basic and acidic residues. The segment covering S1089–G1129 has biased composition (polar residues). S1193 is modified (phosphoserine). Disordered stretches follow at residues Q1217–N1238 and Q1369–P1391.

Can form homodimers (via C-terminus). Interacts (via C-terminus) with WDR62 (via C-terminus). Interacts with MAPK9. Interacts (via N-terminus) with NOD2; the interaction is enhanced in presence of muramyl dipeptide (MDP). Interacts with MAPK10. As to expression, ubiquitously expressed. Highest expression observed in brain.

Its subcellular location is the cytoplasm. It localises to the nucleus. The protein resides in the cytoskeleton. It is found in the spindle pole. In terms of biological role, negative regulator of NOD2 function. It down-regulates NOD2-induced processes such as activation of NF-kappa-B signaling, IL8 secretion and antibacterial response. Involved in JNK signaling pathway. This Mus musculus (Mouse) protein is Mitogen-activated protein kinase-binding protein 1 (Mapkbp1).